Here is a 272-residue protein sequence, read N- to C-terminus: Phosphoglycolate phosphatase (272 aa).

Asp-19 serves as the catalytic Nucleophile. Residues Asp-19, Asp-21, and Asp-182 each contribute to the Mg(2+) site.

It belongs to the HAD-like hydrolase superfamily. CbbY/CbbZ/Gph/YieH family. Mg(2+) serves as cofactor.

The catalysed reaction is 2-phosphoglycolate + H2O = glycolate + phosphate. It participates in organic acid metabolism; glycolate biosynthesis; glycolate from 2-phosphoglycolate: step 1/1. Functionally, specifically catalyzes the dephosphorylation of 2-phosphoglycolate. Is involved in the dissimilation of the intracellular 2-phosphoglycolate formed during the DNA repair of 3'-phosphoglycolate ends, a major class of DNA lesions induced by oxidative stress. In Pseudomonas syringae pv. syringae (strain B728a), this protein is Phosphoglycolate phosphatase.